The primary structure comprises 493 residues: Galactose-1-phosphate uridylyltransferase (493 aa).

The protein belongs to the galactose-1-phosphate uridylyltransferase type 2 family.

Its subcellular location is the cytoplasm. The enzyme catalyses alpha-D-galactose 1-phosphate + UDP-alpha-D-glucose = alpha-D-glucose 1-phosphate + UDP-alpha-D-galactose. It participates in carbohydrate metabolism; galactose metabolism. The chain is Galactose-1-phosphate uridylyltransferase from Streptococcus pneumoniae serotype 19F (strain G54).